A 470-amino-acid chain; its full sequence is Uronate isomerase (470 aa).

This sequence belongs to the metallo-dependent hydrolases superfamily. Uronate isomerase family.

It catalyses the reaction D-glucuronate = D-fructuronate. It carries out the reaction aldehydo-D-galacturonate = keto-D-tagaturonate. It participates in carbohydrate metabolism; pentose and glucuronate interconversion. This is Uronate isomerase from Sphingopyxis alaskensis (strain DSM 13593 / LMG 18877 / RB2256) (Sphingomonas alaskensis).